The primary structure comprises 381 residues: MASPSCFHSEDEDSLKGCEMYVQKHGIQQVLKECIVHLCVAKPDRPLRFLREHFEKLEKEENRQILARQKSNSQCDSHDEEISPTPPNPVVKARRRRGGVSAEVYTEEDAVSYVRKVIPKDYKTMTALAKAISKNVLFSHLDDNERSDIFDAMFPVTHIGGETVIQQGNEGDNFYVIDQGEVDVYVNGEWVTNISEGGSFGELALIYGTPRAATVKAKTDLKLWGIDRDSYRRILMGSTLRKRKMYEEFLSKVSILESLEKWERLTVADALEPVQFEDGEKIVVQGEPGDDFYIITEGTASVLQRRSPNEEYVEVGRLGPSDYFGEIALLLNRPRAATVVARGPLKCVKLDRPRFERVLGPCSEILKRNIQRYNSFISLTV.

Positions 1-136 (MASPSCFHSE…ALAKAISKNV (136 aa)) are dimerization and phosphorylation. S3 bears the Phosphoserine mark. At Y21 the chain carries 3'-nitrotyrosine. The tract at residues 66 to 88 (LARQKSNSQCDSHDEEISPTPPN) is disordered. Residues S77 and S83 each carry the phosphoserine modification. T85 is modified (phosphothreonine). A Pseudophosphorylation motif motif is present at residues 96 to 100 (RRGGV). At R97 the chain carries Omega-N-methylarginine. 3',5'-cyclic AMP is bound by residues 137–254 (LFSH…SKVS), E202, R211, 255–381 (ILES…SLTV), E326, and R335.

It belongs to the cAMP-dependent kinase regulatory chain family. The inactive holoenzyme is composed of two regulatory chains and two catalytic chains. Activation by cAMP releases the two active catalytic monomers and the regulatory dimer. Interacts with PRKX; regulates this cAMP-dependent protein kinase. Interacts with smAKAP; this interaction may target PRKAR1B to the plasma membrane. Post-translationally, the pseudophosphorylation site binds to the substrate-binding region of the catalytic chain, resulting in the inhibition of its activity. As to expression, four types of regulatory chains are found: I-alpha, I-beta, II-alpha, and II-beta. Their expression varies among tissues and is in some cases constitutive and in others inducible.

Its subcellular location is the cell membrane. Functionally, regulatory subunit of the cAMP-dependent protein kinases involved in cAMP signaling in cells. The polypeptide is cAMP-dependent protein kinase type I-beta regulatory subunit (Prkar1b) (Mus musculus (Mouse)).